Here is a 157-residue protein sequence, read N- to C-terminus: uncharacterized protein (157 aa).

4 helical membrane passes run 29 to 49, 52 to 72, 93 to 113, and 117 to 137; these read LLIIPLLLLWGVSASFQPAYF, VLHVAISGILLLIGLACGFGI, LGSVILILVILSLRMAARTWL, and NEMFIAIIHSMFFVPLGTITA.

The protein resides in the cell membrane. This is an uncharacterized protein from Bacillus subtilis (strain 168).